The following is a 123-amino-acid chain: Putative membrane protein insertion efficiency factor (123 aa).

The tract at residues 1 to 23 (MGSCGGKHTGKGAPKPYSRNFTD) is disordered.

Belongs to the UPF0161 family.

It localises to the cell inner membrane. Its function is as follows. Could be involved in insertion of integral membrane proteins into the membrane. The protein is Putative membrane protein insertion efficiency factor of Brucella ovis (strain ATCC 25840 / 63/290 / NCTC 10512).